We begin with the raw amino-acid sequence, 347 residues long: Protein N-terminal asparagine amidohydrolase (347 aa).

The enzyme catalyses N-terminal L-asparaginyl-[protein] + H2O + H(+) = N-terminal L-aspartyl-[protein] + NH4(+). N-terminal asparagine deamidase that mediates deamidation of N-terminal asparagine residues to aspartate. Required for the ubiquitin-dependent turnover of intracellular proteins that initiate with Met-Asn. These proteins are acetylated on the retained initiator methionine and can subsequently be modified by the removal of N-acetyl methionine by acylaminoacid hydrolase (AAH). Conversion of the resulting N-terminal asparagine to aspartate by NTAN1 renders the protein susceptible to arginylation, polyubiquitination and degradation as specified by the N-end rule. This enzyme does not act on substrates with internal or C-terminal asparagines and does not act on glutamine residues in any position. Does not seem to be involved in immune response, unlike the N-terminal glutamine amidohydrolase NTAQ1. The sequence is that of Protein N-terminal asparagine amidohydrolase from Arabidopsis thaliana (Mouse-ear cress).